We begin with the raw amino-acid sequence, 212 residues long: Cell division protein YtfB (212 aa).

The chain crosses the membrane as a helical span at residues 34-50; that stretch reads GIIIAAIVLVVGFLLPS. The tract at residues 88–127 is disordered; that stretch reads NDPDQVAPVAPEPIQEGQPEEQPQTTQTQPFQPDSGIDNQ. Positions 99–120 are enriched in low complexity; the sequence is EPIQEGQPEEQPQTTQTQPFQP. The oapA stretch occupies residues 117–212; sequence PFQPDSGIDN…QPDGSFIRAR (96 aa).

Belongs to the OapA family.

It localises to the cell inner membrane. Cell division protein whose function is related to the generation of a transient cell wall structure. Function is linked to the late stages of cell division. The polypeptide is Cell division protein YtfB (ytfB) (Escherichia coli (strain K12)).